A 353-amino-acid chain; its full sequence is Tsukushi (353 aa).

The first 17 residues, 1–17 (MLCTLFLLLLALGIVQT), serve as a signal peptide directing secretion. Residues 18–59 (TRPCFPGCQCEEETFGLFDSFSLIRVDCSSLGPHIVPVPIPL) form the LRRNT domain. LRR repeat units lie at residues 60 to 80 (DTAH…SVLG), 86 to 107 (TLAG…AFSR), 110 to 131 (YLES…VFTS), 133 to 154 (PLSD…AFTT), 160 to 180 (ALHV…PARA), 186 to 207 (TIQS…RDLP), 208 to 228 (LRYL…AFMG), 231 to 253 (GLTH…GFRE), 256 to 277 (GLQV…EVFS), and 281 to 302 (LLQE…LLHH). A glycan (N-linked (GlcNAc...) asparagine) is linked at N75. N-linked (GlcNAc...) asparagine glycosylation is present at N138. N-linked (GlcNAc...) asparagine glycosylation is present at N191.

In terms of assembly, interacts with FZD4 (via FZ domain); competes with WNT2B for binding to FZD4, inhibiting Wnt signaling and repressing peripheral eye development. Interacts with TGFB1; the interaction contributes to regulation of the hair cycle. Interacts with netrin. Interacts with CCN2. Expressed at high levels in the liver, small intestine and placenta. Not or barely detectable in other tissues, including whole pancreas, adipose tissues, skeletal muscle, kidney, spleen, brain, lung and testis.

It is found in the secreted. Contributes to various developmental events and other processes such as wound healing and cholesterol homeostasis through its interactions with multiple signaling pathways. Wnt signaling inhibitor which competes with WNT2B for binding to Wnt receptor FZD4 and represses WNT2B-dependent development of the peripheral eye. Plays a role in regulating the hair cycle by controlling TGFB1 signaling. Required for the development of the anterior commissure in the brain by inhibiting neurite outgrowth. Essential for terminal differentiation of hippocampal neural stem cells. Plays a role in regulating bone elongation and bone mass by modulating growth plate chondrocyte function and overall body size. Required for development of the inner ear through its involvement in stereocilia formation in inner hair cells. Facilitates wound healing by inhibiting secretion of TGFB1 from macrophages which prevents myofibroblast differentiation, maintaining inflammatory cell quiescence. Plays a role in cholesterol homeostasis by reducing circulating high-density lipoprotein cholesterol, lowering cholesterol efflux capacity and decreasing cholesterol-to-bile acid conversion in the liver. In one study, shown to negatively regulate sympathetic innervation in brown fat, leading to reduced energy expenditure. In another study, shown not to affect brown fat thermogenic capacity, body weight gain or glucose homeostasis. The polypeptide is Tsukushi (Tsku) (Rattus norvegicus (Rat)).